The following is a 123-amino-acid chain: Fluoride-specific ion channel FluC (123 aa).

Helical transmembrane passes span 1-21 (MQWL…GWLA), 32-52 (LGTL…LVWF), 66-86 (FVIT…AEVF), and 94-114 (LLAA…ATAL). Positions 73 and 76 each coordinate Na(+).

This sequence belongs to the fluoride channel Fluc/FEX (TC 1.A.43) family.

The protein localises to the cell inner membrane. It carries out the reaction fluoride(in) = fluoride(out). Na(+) is not transported, but it plays an essential structural role and its presence is essential for fluoride channel function. Its function is as follows. Fluoride-specific ion channel. Important for reducing fluoride concentration in the cell, thus reducing its toxicity. The polypeptide is Fluoride-specific ion channel FluC (Psychrobacter arcticus (strain DSM 17307 / VKM B-2377 / 273-4)).